The following is a 542-amino-acid chain: uncharacterized protein (542 aa).

5 helical membrane-spanning segments follow: residues 4–23, 28–47, 57–79, 86–108, and 151–173; these read ILRDNPLLLLFIVAGIGYPL, IGGIHLGVAAVLFVGLAFGA, IVYQFGLALFVYCVGLSSGHGFL, GVIYNLLTLGVILLAAALLLIPH, and PVVGYSIAYPASVLGVILAIYLA. RCK C-terminal domains lie at 186–270 and 273–356; these read RTLK…VIGC and EVQA…LGDS. 6 consecutive transmembrane segments (helical) span residues 365-384, 389-408, 415-437, 457-479, 484-506, and 519-541; these read IAVLGLGMALGIGLGLVPIP, ITVRLGLAGGPLIVALFLGA, LVWVLPYSANMLLRQMGLTIFLA, WAILGASAAIIVLLSWVMLYVGY, IPMGLLTGMVAGMQTQSATLGFA, and YAMVYPMAMVVKIVLAPVIIAVL.

This sequence belongs to the AAE transporter (TC 2.A.81) family.

Its subcellular location is the cell membrane. This is an uncharacterized protein from Symbiobacterium thermophilum (strain DSM 24528 / JCM 14929 / IAM 14863 / T).